The primary structure comprises 130 residues: Mating-type-like protein A1 (130 aa).

The segment at residues 68–127 (TYTTRKPLPAKAKLQLVETFSKKRYLTRCEKHQLAVQCGITTNQVQIWFANRRKRSKDLN) is a DNA-binding region (homeobox).

Belongs to the MATA1 family.

It is found in the nucleus. In terms of biological role, mating type proteins are sequence specific DNA-binding proteins that act as master switches in yeast differentiation by controlling gene expression in a cell type-specific fashion. This is Mating-type-like protein A1 (MTL1A1) from Candida glabrata (strain ATCC 2001 / BCRC 20586 / JCM 3761 / NBRC 0622 / NRRL Y-65 / CBS 138) (Yeast).